The sequence spans 270 residues: Sec-independent protein translocase protein TatC (270 aa).

Transmembrane regions (helical) follow at residues 25 to 45, 75 to 95, 111 to 131, 156 to 176, 195 to 211, and 213 to 233; these read FIAVGVGFVIAYCFKERLFDI, VSLLTGVILATPVLFYEFWMF, VVILSIFFFCVGSSFGYFIVF, LGFASKMLLAFGFVFELPLVL, KYAILIFFTGAALITPP, and VVTQIMMAIPLMILYEISIIG. A disordered region spans residues 243-270; the sequence is SDEEEAAENSDVQTDKSTDDTTPGEDQN.

The protein belongs to the TatC family. In terms of assembly, the Tat system comprises two distinct complexes: a TatABC complex, containing multiple copies of TatA, TatB and TatC subunits, and a separate TatA complex, containing only TatA subunits. Substrates initially bind to the TatABC complex, which probably triggers association of the separate TatA complex to form the active translocon.

It is found in the cell inner membrane. Its function is as follows. Part of the twin-arginine translocation (Tat) system that transports large folded proteins containing a characteristic twin-arginine motif in their signal peptide across membranes. Together with TatB, TatC is part of a receptor directly interacting with Tat signal peptides. This chain is Sec-independent protein translocase protein TatC, found in Desulforapulum autotrophicum (strain ATCC 43914 / DSM 3382 / VKM B-1955 / HRM2) (Desulfobacterium autotrophicum).